The following is a 539-amino-acid chain: Trigger factor (539 aa).

The 90-residue stretch at 163–252 (GDQLTVQIET…VLDVQERLLP (90 aa)) folds into the PPIase FKBP-type domain. Composition is skewed to low complexity over residues 434–447 (SFEQ…ASEP) and 475–484 (AASPEAASEP). Positions 434-539 (SFEQAASPEA…DVATPEARTE (106 aa)) are disordered. Polar residues predominate over residues 509–528 (TETPIVSQEENGESVENQSV).

The protein belongs to the FKBP-type PPIase family. Tig subfamily.

Its subcellular location is the cytoplasm. It carries out the reaction [protein]-peptidylproline (omega=180) = [protein]-peptidylproline (omega=0). Functionally, involved in protein export. Acts as a chaperone by maintaining the newly synthesized protein in an open conformation. Functions as a peptidyl-prolyl cis-trans isomerase. The sequence is that of Trigger factor from Roseiflexus sp. (strain RS-1).